The sequence spans 843 residues: Protein P (843 aa).

Positions 1–177 are terminal protein domain (TP); the sequence is MPLSYPHFRK…FCGSPYSWEQ (177 aa). The spacer stretch occupies residues 178–346; sequence ELQHGSTSLN…YCLSHIINLL (169 aa). 2 disordered regions span residues 228 to 259 and 283 to 314; these read KQGQLANGKQGRSGRLRSRVHTPTRWPAGVEP and EKANPSLSTSKRHTSTGNAVELNPVPPSSVGS. Residues 239-249 are compositionally biased toward basic residues; it reads RSGRLRSRVHT. Residues 347-690 form a polymerase/reverse transcriptase domain (RT) region; it reads EDWGPCYEHG…YMNLYPVARQ (344 aa). The Reverse transcriptase domain occupies 357 to 600; it reads QHYIRTPRTP…YSLHFMGYVI (244 aa). Mg(2+) contacts are provided by D429, D551, and D552.

The protein belongs to the hepadnaviridae P protein family.

The catalysed reaction is DNA(n) + a 2'-deoxyribonucleoside 5'-triphosphate = DNA(n+1) + diphosphate. The enzyme catalyses Endonucleolytic cleavage to 5'-phosphomonoester.. With respect to regulation, activated by host HSP70 and HSP40 in vitro to be able to bind the epsilon loop of the pgRNA. Because deletion of the RNase H region renders the protein partly chaperone-independent, the chaperones may be needed indirectly to relieve occlusion of the RNA-binding site by this domain. Inhibited by several reverse-transcriptase inhibitors: Lamivudine, Adefovir and Entecavir. Multifunctional enzyme that converts the viral RNA genome into dsDNA in viral cytoplasmic capsids. This enzyme displays a DNA polymerase activity that can copy either DNA or RNA templates, and a ribonuclease H (RNase H) activity that cleaves the RNA strand of RNA-DNA heteroduplexes in a partially processive 3'- to 5'-endonucleasic mode. Neo-synthesized pregenomic RNA (pgRNA) are encapsidated together with the P protein, and reverse-transcribed inside the nucleocapsid. Initiation of reverse-transcription occurs first by binding the epsilon loop on the pgRNA genome, and is initiated by protein priming, thereby the 5'-end of (-)DNA is covalently linked to P protein. Partial (+)DNA is synthesized from the (-)DNA template and generates the relaxed circular DNA (RC-DNA) genome. After budding and infection, the RC-DNA migrates in the nucleus, and is converted into a plasmid-like covalently closed circular DNA (cccDNA). The activity of P protein does not seem to be necessary for cccDNA generation, and is presumably released from (+)DNA by host nuclear DNA repair machinery. This Homo sapiens (Human) protein is Protein P.